The sequence spans 240 residues: Lactate utilization protein C (240 aa).

It belongs to the LutC/YkgG family.

Functionally, is involved in L-lactate degradation and allows cells to grow with lactate as the sole carbon source. The protein is Lactate utilization protein C of Bacillus licheniformis (strain ATCC 14580 / DSM 13 / JCM 2505 / CCUG 7422 / NBRC 12200 / NCIMB 9375 / NCTC 10341 / NRRL NRS-1264 / Gibson 46).